Consider the following 165-residue polypeptide: Cyanate hydratase (165 aa).

Catalysis depends on residues R106, E109, and S132.

The protein belongs to the cyanase family.

It catalyses the reaction cyanate + hydrogencarbonate + 3 H(+) = NH4(+) + 2 CO2. Catalyzes the reaction of cyanate with bicarbonate to produce ammonia and carbon dioxide. This is Cyanate hydratase from Laccaria bicolor (strain S238N-H82 / ATCC MYA-4686) (Bicoloured deceiver).